Here is a 561-residue protein sequence, read N- to C-terminus: Lipase maturation factor 1 (561 aa).

A disordered region spans residues 1–32 (MAAPRESLRRRKAGAGDPEPEAPPGQGRDLKG). Over 1-42 (MAAPRESLRRRKAGAGDPEPEAPPGQGRDLKGRPARLRAGTF) the chain is Cytoplasmic. A helical transmembrane segment spans residues 43–65 (WLTRIVLLRALAFVYFVAFLVAF). At 66–120 (HQNKQLIGDRGLLPCRAYLQSVQRHFGGRVSWDALSYAPTILWLLDWSHMDANLD) the chain is on the lumenal side. The chain crosses the membrane as a helical span at residues 121 to 144 (ALALLGLGISSFILVSGCANMVLM). Over 145–200 (AALWVLYMSLVNVGQIWYSFGWESQLLETGFLGIFLCPLWTLSALPRGTPTSWVVM) the chain is Cytoplasmic. The chain crosses the membrane as a helical span at residues 201-214 (WGFRWLIFRIMLGA). Residues 215–285 (GLIKIRGDRC…LGRRMCIVHG (71 aa)) lie on the Lumenal side of the membrane. Residues 286-314 (ALQVLFQVVLIISGNLSFLNWLTIVPSLA) form a helical membrane-spanning segment. Over 315 to 360 (CFDDATLGGLFPSGPGRLKDQVLKIQEEETRGARAPRTRGSVARGT) the chain is Cytoplasmic. Residues 361-382 (VNLALGILVAWLSIPVVLNLLS) traverse the membrane as a helical segment. Residues 383-561 (PRQVMNSSFN…SRQWPYPEPE (179 aa)) lie on the Lumenal side of the membrane.

The protein belongs to the lipase maturation factor family. Interacts with LPL and SEL1L.

The protein resides in the endoplasmic reticulum membrane. Functionally, involved in the maturation of specific proteins in the endoplasmic reticulum. Required for maturation and transport of active lipoprotein lipase (LPL) through the secretory pathway. Each LMF1 molecule chaperones 50 or more molecules of LPL. This chain is Lipase maturation factor 1 (LMF1), found in Bos taurus (Bovine).